Here is a 570-residue protein sequence, read N- to C-terminus: Periplasmic trehalase (570 aa).

An N-terminal signal peptide occupies residues 1-34 (MIPPEIRRSVLLQKAIKLALAGTLLTFASFSATA). Substrate is bound by residues Arg-159, 166-167 (WD), Asn-203, 212-214 (RSQ), 284-286 (RPE), and Gly-317. Residues Asp-319 and Glu-503 each act as proton donor/acceptor in the active site. Residue Glu-518 participates in substrate binding. Residues 544–570 (KPCDSVPSTRPASLSATPTKTPSAATQ) form a disordered region. Positions 554–570 (PASLSATPTKTPSAATQ) are enriched in low complexity.

Belongs to the glycosyl hydrolase 37 family. Monomer.

It is found in the periplasm. It carries out the reaction alpha,alpha-trehalose + H2O = alpha-D-glucose + beta-D-glucose. Functionally, provides the cells with the ability to utilize trehalose at high osmolarity by splitting it into glucose molecules that can subsequently be taken up by the phosphotransferase-mediated uptake system. This chain is Periplasmic trehalase, found in Salmonella paratyphi A (strain AKU_12601).